The chain runs to 158 residues: NAD(P)H-quinone oxidoreductase subunit N (158 aa).

The protein belongs to the complex I NdhN subunit family. NDH-1 can be composed of about 15 different subunits; different subcomplexes with different compositions have been identified which probably have different functions.

It localises to the cellular thylakoid membrane. It carries out the reaction a plastoquinone + NADH + (n+1) H(+)(in) = a plastoquinol + NAD(+) + n H(+)(out). It catalyses the reaction a plastoquinone + NADPH + (n+1) H(+)(in) = a plastoquinol + NADP(+) + n H(+)(out). Functionally, NDH-1 shuttles electrons from an unknown electron donor, via FMN and iron-sulfur (Fe-S) centers, to quinones in the respiratory and/or the photosynthetic chain. The immediate electron acceptor for the enzyme in this species is believed to be plastoquinone. Couples the redox reaction to proton translocation, and thus conserves the redox energy in a proton gradient. Cyanobacterial NDH-1 also plays a role in inorganic carbon-concentration. In Crocosphaera subtropica (strain ATCC 51142 / BH68) (Cyanothece sp. (strain ATCC 51142)), this protein is NAD(P)H-quinone oxidoreductase subunit N.